A 262-amino-acid chain; its full sequence is Transmembrane protein 81 (262 aa).

Positions Met-1–Ala-30 are cleaved as a signal peptide. Over Ile-31–Ser-225 the chain is Extracellular. N-linked (GlcNAc...) asparagine glycosylation occurs at Asn-45. Residues Thr-83–Val-171 form the Ig-like domain. Cys-104 and Cys-160 are joined by a disulfide. Asn-211 carries N-linked (GlcNAc...) asparagine glycosylation. A helical transmembrane segment spans residues Leu-226–Leu-246. Residues Cys-247–Leu-262 are Cytoplasmic-facing.

In terms of assembly, forms a complex with IZUMO1 and SPACA6 on spermatocyte cell membrane required for fertilization.

Its subcellular location is the cell membrane. Its function is as follows. Essential fertilization factor required for male fertility. Part of a conserved trimeric sperm complex with the essential fertilization factors IZUMO1 and SPACA6 which bridges sperm and oocyte membranes during fertilization by binding to IZUMO1R/JUNO on the oocyte. In Rattus norvegicus (Rat), this protein is Transmembrane protein 81 (Tmem81).